We begin with the raw amino-acid sequence, 427 residues long: Glutamate-1-semialdehyde 2,1-aminomutase (427 aa).

Lysine 268 carries the N6-(pyridoxal phosphate)lysine modification.

It belongs to the class-III pyridoxal-phosphate-dependent aminotransferase family. HemL subfamily. Pyridoxal 5'-phosphate is required as a cofactor.

It is found in the cytoplasm. The catalysed reaction is (S)-4-amino-5-oxopentanoate = 5-aminolevulinate. It functions in the pathway porphyrin-containing compound metabolism; protoporphyrin-IX biosynthesis; 5-aminolevulinate from L-glutamyl-tRNA(Glu): step 2/2. The polypeptide is Glutamate-1-semialdehyde 2,1-aminomutase (Methanococcus maripaludis (strain DSM 14266 / JCM 13030 / NBRC 101832 / S2 / LL)).